Consider the following 247-residue polypeptide: 2,3-bisphosphoglycerate-dependent phosphoglycerate mutase (247 aa).

Residues 8 to 15 (RHGESVWN), 21 to 22 (TG), R60, 87 to 90 (ERHY), K98, 114 to 115 (RR), and 183 to 184 (GN) contribute to the substrate site. H9 serves as the catalytic Tele-phosphohistidine intermediate. E87 (proton donor/acceptor) is an active-site residue.

This sequence belongs to the phosphoglycerate mutase family. BPG-dependent PGAM subfamily. Homodimer.

The enzyme catalyses (2R)-2-phosphoglycerate = (2R)-3-phosphoglycerate. The protein operates within carbohydrate degradation; glycolysis; pyruvate from D-glyceraldehyde 3-phosphate: step 3/5. Functionally, catalyzes the interconversion of 2-phosphoglycerate and 3-phosphoglycerate. In Geobacter sulfurreducens (strain ATCC 51573 / DSM 12127 / PCA), this protein is 2,3-bisphosphoglycerate-dependent phosphoglycerate mutase.